The chain runs to 918 residues: Serine/threonine-protein kinase D1 (918 aa).

Tyrosine 93 carries the phosphotyrosine modification. The Phorbol-ester/DAG-type 1 zinc finger occupies 144–194 (PHALFVHSYRAPAFCDHCGEMLWGLVRQGLKCEGCGLNYHKRCAFKIPNNC). 4 positions are modified to phosphoserine: serine 203, serine 206, serine 217, and serine 221. The segment at 276–326 (PHTFVIHSYTRPTVCQFCKKLLKGLFRQGLQCKDCRFNCHKRCAPKVPNNC) adopts a Phorbol-ester/DAG-type 2 zinc-finger fold. Disordered regions lie at residues 338 to 362 (SPGAESDVVMEEGSDDNDSERNSGL) and 380 to 408 (EGQSDGAEMQDPDADQEDSNRTISPSTSN). Composition is skewed to acidic residues over residues 345–355 (VVMEEGSDDND) and 387–396 (EMQDPDADQE). Serine 351 carries the phosphoserine modification. 2 positions are modified to phosphoserine; by MAPK13: serine 403 and serine 407. In terms of domain architecture, PH spans 428–547 (TVMKEGWMVH…WEVAIQHALM (120 aa)). Tyrosine 438 carries the post-translational modification Phosphotyrosine. Phosphoserine is present on serine 454. Tyrosine 469 carries the phosphotyrosine; by ABL modification. Tyrosine 508 carries the post-translational modification Phosphotyrosine. Residue serine 554 is modified to Phosphoserine. One can recognise a Protein kinase domain in the interval 589–845 (IFPDEVLGSG…VDKTLSHPWL (257 aa)). ATP contacts are provided by residues 595–603 (LGSGQFGIV) and lysine 618. Aspartate 712 functions as the Proton acceptor in the catalytic mechanism. Serine 744 is subject to Phosphoserine; by PKC/PRKCD. Serine 748 carries the phosphoserine; by autocatalysis and PKC/PRKCD modification. A Phosphotyrosine modification is found at tyrosine 755. At serine 916 the chain carries Phosphoserine; by autocatalysis.

This sequence belongs to the protein kinase superfamily. CAMK Ser/Thr protein kinase family. PKD subfamily. In terms of assembly, interacts (via N-terminus) with ADAP1/CENTA1. Interacts with MAPK13. Interacts with DAPK1 in an oxidative stress-regulated manner. Interacts with USP28; the interaction induces phosphorylation of USP28 and activated KRAS-mediated stabilization of ZNF304. Interacts with AKAP13 (via C-terminal domain). The cofactor is Mg(2+). Phosphorylated at Ser-403 and Ser-407 by MAPK13 during regulation of insulin secretion in pancreatic beta cells. Phosphorylated by DAPK1. Phosphorylated at Tyr-93 and by ABL at Tyr-469, which primes the kinase in response to oxidative stress, and promotes a second step activating phosphorylation at Ser-744/Ser-748 by PKRD. Phosphorylated on Ser-916 upon S.enterica infection in macrophages.

The protein resides in the cytoplasm. It localises to the cell membrane. The protein localises to the golgi apparatus. It is found in the trans-Golgi network. The enzyme catalyses L-seryl-[protein] + ATP = O-phospho-L-seryl-[protein] + ADP + H(+). It catalyses the reaction L-threonyl-[protein] + ATP = O-phospho-L-threonyl-[protein] + ADP + H(+). Its activity is regulated as follows. Activated by DAG and phorbol esters. Phorbol-ester/DAG-type domain 1 binds DAG with high affinity and appears to play the dominant role in mediating translocation to the cell membrane and trans-Golgi network. Phorbol-ester/DAG-type domain 2 binds phorbol ester with higher affinity. Autophosphorylation of Ser-748 and phosphorylation of Ser-744 by PKC relieves auto-inhibition by the PH domain. Phosphorylation on Tyr-469 by the SRC-ABL1 pathway in response to oxidative stress, is also required for activation. Activated by DAPK1 under oxidative stress. Its function is as follows. Serine/threonine-protein kinase that converts transient diacylglycerol (DAG) signals into prolonged physiological effects downstream of PKC, and is involved in the regulation of MAPK8/JNK1 and Ras signaling, Golgi membrane integrity and trafficking, cell survival through NF-kappa-B activation, cell migration, cell differentiation by mediating HDAC7 nuclear export, cell proliferation via MAPK1/3 (ERK1/2) signaling, and plays a role in cardiac hypertrophy, VEGFA-induced angiogenesis, genotoxic-induced apoptosis and flagellin-stimulated inflammatory response. Phosphorylates the epidermal growth factor receptor (EGFR) on dual threonine residues, which leads to the suppression of epidermal growth factor (EGF)-induced MAPK8/JNK1 activation and subsequent JUN phosphorylation. Phosphorylates RIN1, inducing RIN1 binding to 14-3-3 proteins YWHAB, YWHAE and YWHAZ and increased competition with RAF1 for binding to GTP-bound form of Ras proteins (NRAS, HRAS and KRAS). Acts downstream of the heterotrimeric G-protein beta/gamma-subunit complex to maintain the structural integrity of the Golgi membranes, and is required for protein transport along the secretory pathway. In the trans-Golgi network (TGN), regulates the fission of transport vesicles that are on their way to the plasma membrane. May act by activating the lipid kinase phosphatidylinositol 4-kinase beta (PI4KB) at the TGN for the local synthesis of phosphorylated inositol lipids, which induces a sequential production of DAG, phosphatidic acid (PA) and lyso-PA (LPA) that are necessary for membrane fission and generation of specific transport carriers to the cell surface. Under oxidative stress, is phosphorylated at Tyr-469 via SRC-ABL1 and contributes to cell survival by activating IKK complex and subsequent nuclear translocation and activation of NFKB1. Involved in cell migration by regulating integrin alpha-5/beta-3 recycling and promoting its recruitment in newly forming focal adhesion. In osteoblast differentiation, mediates the bone morphogenetic protein 2 (BMP2)-induced nuclear export of HDAC7, which results in the inhibition of HDAC7 transcriptional repression of RUNX2. In neurons, plays an important role in neuronal polarity by regulating the biogenesis of TGN-derived dendritic vesicles, and is involved in the maintenance of dendritic arborization and Golgi structure in hippocampal cells. May potentiate mitogenesis induced by the neuropeptide bombesin or vasopressin by mediating an increase in the duration of MAPK1/3 (ERK1/2) signaling, which leads to accumulation of immediate-early gene products including FOS that stimulate cell cycle progression. Plays an important role in the proliferative response induced by low calcium in keratinocytes, through sustained activation of MAPK1/3 (ERK1/2) pathway. Downstream of novel PKC signaling, plays a role in cardiac hypertrophy by phosphorylating HDAC5, which in turn triggers XPO1/CRM1-dependent nuclear export of HDAC5, MEF2A transcriptional activation and induction of downstream target genes that promote myocyte hypertrophy and pathological cardiac remodeling. Mediates cardiac troponin I (TNNI3) phosphorylation at the PKA sites, which results in reduced myofilament calcium sensitivity, and accelerated crossbridge cycling kinetics. The PRKD1-HDAC5 pathway is also involved in angiogenesis by mediating VEGFA-induced specific subset of gene expression, cell migration, and tube formation. In response to VEGFA, is necessary and required for HDAC7 phosphorylation which induces HDAC7 nuclear export and endothelial cell proliferation and migration. During apoptosis induced by cytarabine and other genotoxic agents, PRKD1 is cleaved by caspase-3 at Asp-378, resulting in activation of its kinase function and increased sensitivity of cells to the cytotoxic effects of genotoxic agents. In epithelial cells, is required for transducing flagellin-stimulated inflammatory responses by binding and phosphorylating TLR5, which contributes to MAPK14/p38 activation and production of inflammatory cytokines. Acts as an activator of NLRP3 inflammasome assembly by mediating phosphorylation of NLRP3. May play a role in inflammatory response by mediating activation of NF-kappa-B. May be involved in pain transmission by directly modulating TRPV1 receptor. Plays a role in activated KRAS-mediated stabilization of ZNF304 in colorectal cancer (CRC) cells. Regulates nuclear translocation of transcription factor TFEB in macrophages upon live S.enterica infection. In Rattus norvegicus (Rat), this protein is Serine/threonine-protein kinase D1 (Prkd1).